A 3075-amino-acid polypeptide reads, in one-letter code: Probable polyketide synthase 30 (3075 aa).

One can recognise a Ketosynthase family 3 (KS3) domain in the interval 26 to 458 (SGDVAVIGIG…GSNVCLILSE (433 aa)). Residues Cys198, His337, and His381 each act as for beta-ketoacyl synthase activity in the active site. An acyl/malonyl transferase region spans residues 663-696 (GVSADIIIGHSLGEVSSPYCSGMIDFQTLCYLTY). The active-site For acyl/malonyl transferase activity is Ser673. The segment at 963–1085 (GPSINNLGNN…GNFSLTKHNS (123 aa)) is N-terminal hotdog fold. Residues 963–1269 (GPSINNLGNN…CALVSLGSNP (307 aa)) enclose the PKS/mFAS DH domain. The active-site Proton acceptor; for dehydratase activity is the His997. A C-terminal hotdog fold region spans residues 1102-1269 (NFTSMSKQDF…CALVSLGSNP (168 aa)). Asp1174 acts as the Proton donor; for dehydratase activity in catalysis. A Carrier domain is found at 2533–2610 (DNNEIIRSTI…QSIEIIKSAH (78 aa)). Position 2570 is an O-(pantetheine 4'-phosphoryl)serine (Ser2570).

The cofactor is pantetheine 4'-phosphate.

Its function is as follows. Probable polyketide synthase. May be involved in the process of cell migration. In Dictyostelium discoideum (Social amoeba), this protein is Probable polyketide synthase 30 (pks30).